The following is a 119-amino-acid chain: Beta-2-microglobulin (119 aa).

Residues 1-20 (MARFVVVPLFVLLSLFGLEA) form the signal peptide. Residues 25–114 (PKIQVYSRYP…VTFSTPKTVK (90 aa)) form the Ig-like C1-type domain. Cysteines 45 and 100 form a disulfide.

Belongs to the beta-2-microglobulin family. Heterodimer of an alpha chain and a beta chain. Beta-2-microglobulin is the beta-chain of major histocompatibility complex class I molecules.

It is found in the secreted. Functionally, component of the class I major histocompatibility complex (MHC). Involved in the presentation of peptide antigens to the immune system. The polypeptide is Beta-2-microglobulin (B2M) (Saguinus niger (Black tamarin)).